Consider the following 337-residue polypeptide: Hsp90 co-chaperone Cdc37-like 1 (337 aa).

The segment covering 1 to 11 (MEQPWPPPGPW) has biased composition (pro residues). The tract at residues 1-43 (MEQPWPPPGPWSLPRAEGEAEEESDLDLSPGSPRCPQLPGGGT) is disordered. Positions 2–171 (EQPWPPPGPW…HEQKIRHFGM (170 aa)) are self-association. S32 and S88 each carry phosphoserine. A coiled-coil region spans residues 84-122 (HNSESLDQEHAKAQTAISELRQREEEWRQKEEALVQRER). The interval 147 to 277 (KETEDEDKSK…SRVRLYSQSP (131 aa)) is self-association and interaction with Hsp90. The tract at residues 267 to 337 (KSRVRLYSQS…DDEPKMMDTV (71 aa)) is interaction with Hsp70. Positions 278 to 337 (NFQPVTVQNHVPHSGVGSIGLLESLPQNPDYLQYSINTALCSLNSVVHKEDDEPKMMDTV) are required for interaction with STIP1.

It belongs to the CDC37 family. In terms of assembly, self-associates. Forms complexes with Hsp70 and Hsp90. Interacts with CDC37, FKBP4, PPID and STIP1.

The protein localises to the cytoplasm. Functionally, co-chaperone that binds to numerous proteins and promotes their interaction with Hsp70 and Hsp90. The protein is Hsp90 co-chaperone Cdc37-like 1 (CDC37L1) of Bos taurus (Bovine).